Reading from the N-terminus, the 297-residue chain is Bifunctional protein FolD 1 (297 aa).

Residues 174–176 (GRS), Ser199, and Ile240 each bind NADP(+).

The protein belongs to the tetrahydrofolate dehydrogenase/cyclohydrolase family. As to quaternary structure, homodimer.

It carries out the reaction (6R)-5,10-methylene-5,6,7,8-tetrahydrofolate + NADP(+) = (6R)-5,10-methenyltetrahydrofolate + NADPH. It catalyses the reaction (6R)-5,10-methenyltetrahydrofolate + H2O = (6R)-10-formyltetrahydrofolate + H(+). It participates in one-carbon metabolism; tetrahydrofolate interconversion. Functionally, catalyzes the oxidation of 5,10-methylenetetrahydrofolate to 5,10-methenyltetrahydrofolate and then the hydrolysis of 5,10-methenyltetrahydrofolate to 10-formyltetrahydrofolate. The protein is Bifunctional protein FolD 1 of Acinetobacter baylyi (strain ATCC 33305 / BD413 / ADP1).